We begin with the raw amino-acid sequence, 336 residues long: Protein-arginine N-acetylglucosaminyltransferase SseK1 (336 aa).

Arg-24 is a glycosylation site (N-beta-linked (GlcNAc) arginine; by autocatalysis). Residues 50-52 (QWF) and Tyr-74 each bind UDP-N-acetyl-alpha-D-glucosamine. A glycan (N-beta-linked (GlcNAc) arginine; by autocatalysis) is linked at Arg-152. The DXD motif motif lies at 223 to 225 (DAD). Residue 224 to 225 (AD) coordinates UDP-N-acetyl-alpha-D-glucosamine. Mn(2+) is bound at residue Asp-225. The active-site Proton acceptor is the Glu-255. Asn-322 and Ser-324 together coordinate Mn(2+). Residues Ser-324 and Ser-329 each coordinate UDP-N-acetyl-alpha-D-glucosamine. N-beta-linked (GlcNAc) arginine; by autocatalysis glycosylation is present at Arg-333.

The protein belongs to the glycosyltransferase NleB family. Requires Mn(2+) as cofactor. Auto-glycosylated: arginine GlcNAcylation is required for activity toward death domain-containing host target proteins.

Its subcellular location is the secreted. The protein localises to the host cytoplasm. It localises to the host cytosol. It catalyses the reaction L-arginyl-[protein] + UDP-N-acetyl-alpha-D-glucosamine = N(omega)-(N-acetyl-beta-D-glucosaminyl)-L-arginyl-[protein] + UDP + H(+). Its activity is regulated as follows. Protein-arginine N-acetylglucosaminyltransferase activity is inhibited by 100066N compound (flavone analog) and 102644N compound (a substituted isoxazole). Protein-arginine N-acetylglucosaminyltransferase effector that disrupts TNF signaling in infected cells, including NF-kappa-B signaling, apoptosis and necroptosis. Acts by catalyzing the transfer of a single N-acetylglucosamine (GlcNAc) to a conserved arginine residue in the death domain of host proteins TRADD and, to a lower extent, FADD: arginine GlcNAcylation prevents homotypic/heterotypic death domain interactions and assembly of the oligomeric TNF-alpha receptor complex, thereby disrupting TNF signaling. Also acts on host proteins without a death domain: catalyzes arginine GlcNAcylation of host GAPDH protein, thereby preventing GAPDH interaction with TRAF2, leading to inhibit NF-kappa-B signaling. Catalyzes GlcNAcylation of host tubulin-folding cofactor TBCB, thereby promoting microtubule stability. Also mediates auto-GlcNAcylation, which is required for activity toward death domain-containing host target proteins. The protein is Protein-arginine N-acetylglucosaminyltransferase SseK1 of Salmonella enteritidis (strain 2009K0958).